Consider the following 33-residue polypeptide: Cytochrome b6-f complex subunit 5 (33 aa).

A helical membrane pass occupies residues 5 to 25; sequence LLFGIILGLISCVLAGLFVSA.

It belongs to the PetG family. As to quaternary structure, the 4 large subunits of the cytochrome b6-f complex are cytochrome b6, subunit IV (17 kDa polypeptide, PetD), cytochrome f and the Rieske protein, while the 4 small subunits are PetG, PetL, PetM and PetN. The complex functions as a dimer.

It is found in the plastid. The protein resides in the chloroplast thylakoid membrane. Its function is as follows. Component of the cytochrome b6-f complex, which mediates electron transfer between photosystem II (PSII) and photosystem I (PSI), cyclic electron flow around PSI, and state transitions. PetG is required for either the stability or assembly of the cytochrome b6-f complex. This is Cytochrome b6-f complex subunit 5 from Bigelowiella natans (Pedinomonas minutissima).